A 132-amino-acid chain; its full sequence is Small ribosomal subunit protein uS8 (132 aa).

It belongs to the universal ribosomal protein uS8 family. Part of the 30S ribosomal subunit. Contacts proteins S5 and S12.

Functionally, one of the primary rRNA binding proteins, it binds directly to 16S rRNA central domain where it helps coordinate assembly of the platform of the 30S subunit. This Bacillus anthracis (strain A0248) protein is Small ribosomal subunit protein uS8.